Here is a 194-residue protein sequence, read N- to C-terminus: Insertion element IS136 uncharacterized 21.2 kDa protein (194 aa).

The segment at 73–103 (SCDRACAPTPGRDPPVSSLPNSRQPARQNPR) is disordered. Residues 90–103 (SLPNSRQPARQNPR) are compositionally biased toward polar residues.

The chain is Insertion element IS136 uncharacterized 21.2 kDa protein from Agrobacterium tumefaciens (strain T37).